We begin with the raw amino-acid sequence, 491 residues long: Protein nucleotidyltransferase YdiU (491 aa).

Residues Gly92, Gly94, Arg95, Lys115, Asp127, Gly128, Arg178, and Arg185 each coordinate ATP. The active-site Proton acceptor is Asp254. The Mg(2+) site is built by Asn255 and Asp264. ATP is bound at residue Asp264.

The protein belongs to the SELO family. Requires Mg(2+) as cofactor. Mn(2+) is required as a cofactor.

It catalyses the reaction L-seryl-[protein] + ATP = 3-O-(5'-adenylyl)-L-seryl-[protein] + diphosphate. The enzyme catalyses L-threonyl-[protein] + ATP = 3-O-(5'-adenylyl)-L-threonyl-[protein] + diphosphate. The catalysed reaction is L-tyrosyl-[protein] + ATP = O-(5'-adenylyl)-L-tyrosyl-[protein] + diphosphate. It carries out the reaction L-histidyl-[protein] + UTP = N(tele)-(5'-uridylyl)-L-histidyl-[protein] + diphosphate. It catalyses the reaction L-seryl-[protein] + UTP = O-(5'-uridylyl)-L-seryl-[protein] + diphosphate. The enzyme catalyses L-tyrosyl-[protein] + UTP = O-(5'-uridylyl)-L-tyrosyl-[protein] + diphosphate. Functionally, nucleotidyltransferase involved in the post-translational modification of proteins. It can catalyze the addition of adenosine monophosphate (AMP) or uridine monophosphate (UMP) to a protein, resulting in modifications known as AMPylation and UMPylation. This Mycolicibacterium paratuberculosis (strain ATCC BAA-968 / K-10) (Mycobacterium paratuberculosis) protein is Protein nucleotidyltransferase YdiU.